A 127-amino-acid polypeptide reads, in one-letter code: Fluoride-specific ion channel FluC 1 (127 aa).

Helical transmembrane passes span 3 to 23 (LLIV…VGQW), 35 to 55 (IAML…FGLY), 74 to 94 (IGFF…VLLI), and 102 to 122 (LFSY…LGFY). Na(+)-binding residues include glycine 78 and threonine 81.

It belongs to the fluoride channel Fluc/FEX (TC 1.A.43) family.

It is found in the cell membrane. It catalyses the reaction fluoride(in) = fluoride(out). Na(+) is not transported, but it plays an essential structural role and its presence is essential for fluoride channel function. Its function is as follows. Fluoride-specific ion channel. Important for reducing fluoride concentration in the cell, thus reducing its toxicity. This Halalkalibacterium halodurans (strain ATCC BAA-125 / DSM 18197 / FERM 7344 / JCM 9153 / C-125) (Bacillus halodurans) protein is Fluoride-specific ion channel FluC 1.